A 944-amino-acid chain; its full sequence is Neutral alpha-glucosidase AB (944 aa).

The N-terminal stretch at 1-28 (MAAVAAVAARRRRSWASLVLAFLGVCLG) is a signal peptide. Cys41 and Cys47 form a disulfide bridge. Ser52 is modified (phosphoserine). An N-linked (GlcNAc...) asparagine glycan is attached at Asn97. The interval 181 to 238 (QRAPRVSQGSKDPAEGDGAQPEETPRDGDKPEETQGKAEKDEPGAWEETFKTHSDSKP) is disordered. A compositionally biased stretch (basic and acidic residues) spans 203-236 (ETPRDGDKPEETQGKAEKDEPGAWEETFKTHSDS). Residues Asp283 and Asp429 each contribute to the substrate site. The active-site Nucleophile is Asp542. Residue Arg602 participates in substrate binding. The active-site Proton donor is the Asp618. The cysteines at positions 633 and 644 are disulfide-linked. His676 serves as a coordination point for substrate.

The protein belongs to the glycosyl hydrolase 31 family. Heterodimer of a catalytic alpha subunit (GANAB) and a beta subunit (PRKCSH). Binds glycosylated PTPRC. In terms of tissue distribution, detected in placenta. Isoform 1 and isoform 2 are expressed in the kidney and liver.

Its subcellular location is the endoplasmic reticulum. The protein resides in the golgi apparatus. It localises to the melanosome. The enzyme catalyses N(4)-(alpha-D-Glc-(1-&gt;3)-alpha-D-Man-(1-&gt;2)-alpha-D-Man-(1-&gt;2)-alpha-D-Man-(1-&gt;3)-[alpha-D-Man-(1-&gt;2)-alpha-D-Man-(1-&gt;3)-[alpha-D-Man-(1-&gt;2)-alpha-D-Man-(1-&gt;6)]-alpha-D-Man-(1-&gt;6)]-beta-D-Man-(1-&gt;4)-beta-D-GlcNAc-(1-&gt;4)-beta-D-GlcNAc)-L-asparaginyl-[protein] + H2O = N(4)-(alpha-D-Man-(1-&gt;2)-alpha-D-Man-(1-&gt;2)-alpha-D-Man-(1-&gt;3)-[alpha-D-Man-(1-&gt;2)-alpha-D-Man-(1-&gt;3)-[alpha-D-Man-(1-&gt;2)-alpha-D-Man-(1-&gt;6)]-alpha-D-Man-(1-&gt;6)]-beta-D-Man-(1-&gt;4)-beta-D-GlcNAc-(1-&gt;4)-beta-D-GlcNAc)-L-asparaginyl-[protein] (N-glucan mannose isomer 9A1,2,3B1,2,3) + beta-D-glucose. It carries out the reaction N(4)-(alpha-D-Glc-(1-&gt;3)-alpha-D-Glc-(1-&gt;3)-alpha-D-Man-(1-&gt;2)-alpha-D-Man-(1-&gt;2)-alpha-D-Man-(1-&gt;3)-[alpha-D-Man-(1-&gt;2)-alpha-D-Man-(1-&gt;3)-[alpha-D-Man-(1-&gt;2)-alpha-D-Man-(1-&gt;6)]-alpha-D-Man-(1-&gt;6)]-beta-D-Man-(1-&gt;4)-beta-D-GlcNAc-(1-&gt;4)-beta-D-GlcNAc)-L-asparaginyl-[protein] + H2O = N(4)-(alpha-D-Glc-(1-&gt;3)-alpha-D-Man-(1-&gt;2)-alpha-D-Man-(1-&gt;2)-alpha-D-Man-(1-&gt;3)-[alpha-D-Man-(1-&gt;2)-alpha-D-Man-(1-&gt;3)-[alpha-D-Man-(1-&gt;2)-alpha-D-Man-(1-&gt;6)]-alpha-D-Man-(1-&gt;6)]-beta-D-Man-(1-&gt;4)-beta-D-GlcNAc-(1-&gt;4)-beta-D-GlcNAc)-L-asparaginyl-[protein] + beta-D-glucose. It participates in glycan metabolism; N-glycan metabolism. With respect to regulation, inhibited by deoxynojirimycin. Its function is as follows. Catalytic subunit of glucosidase II that cleaves sequentially the 2 innermost alpha-1,3-linked glucose residues from the Glc(2)Man(9)GlcNAc(2) oligosaccharide precursor of immature glycoproteins. Required for PKD1/Polycystin-1 and PKD2/Polycystin-2 maturation and localization to the cell surface and cilia. The chain is Neutral alpha-glucosidase AB from Homo sapiens (Human).